Consider the following 413-residue polypeptide: DnaJ protein homolog (413 aa).

One can recognise a J domain in the interval 10–75 (NTKYYEILGV…REIYDQYGED (66 aa)). The segment at 133-217 (GTSKKLSLSR…CKGEKVVQEK (85 aa)) adopts a CR-type zinc-finger fold. 4 CXXCXGXG motif repeats span residues 146–153 (CSKCKGKG), 162–169 (CPGCQGSG), 189–196 (CNECKGTG), and 205–212 (CSQCKGEK). The disordered stretch occupies residues 387–413 (RRKQAQEAYDEDEDMHGGAQRVQCAQQ). Cysteine 410 is subject to Cysteine methyl ester. Residue cysteine 410 is the site of S-farnesyl cysteine attachment. A propeptide spans 411–413 (AQQ) (removed in mature form).

In terms of tissue distribution, expressed in seedlings in all tissues, but exceedingly high levels in hypocotyledons and roots.

Its subcellular location is the cell membrane. Its function is as follows. Plays a continuous role in plant development probably in the structural organization of compartments. This Cucumis sativus (Cucumber) protein is DnaJ protein homolog (DNAJ1).